Here is a 312-residue protein sequence, read N- to C-terminus: Olfactory receptor 2L5 (312 aa).

Residues Met1–Leu24 are Extracellular-facing. Asn5 is a glycosylation site (N-linked (GlcNAc...) asparagine). A helical membrane pass occupies residues Phe25 to Ile48. Topologically, residues Phe49–Thr56 are cytoplasmic. A helical membrane pass occupies residues Pro57–Pro78. Over Lys79 to Gln99 the chain is Extracellular. Cys96 and Cys188 are disulfide-bonded. Residues Ser100–Tyr119 form a helical membrane-spanning segment. The Cytoplasmic segment spans residues Asp120–Arg138. Residues Met139 to Ala157 form a helical membrane-spanning segment. The Extracellular portion of the chain corresponds to His158–Tyr194. The chain crosses the membrane as a helical span at residues Glu195–Gly218. The Cytoplasmic segment spans residues Trp219–Lys235. A helical transmembrane segment spans residues Ala236–Tyr258. Over Leu259–Lys271 the chain is Extracellular. Residues Val272 to Leu291 traverse the membrane as a helical segment. Residues Arg292–Met312 are Cytoplasmic-facing.

This sequence belongs to the G-protein coupled receptor 1 family.

Its subcellular location is the cell membrane. Its function is as follows. Odorant receptor. In Homo sapiens (Human), this protein is Olfactory receptor 2L5 (OR2L5).